The primary structure comprises 158 residues: Endoribonuclease YbeY (158 aa).

His-118, His-122, and His-128 together coordinate Zn(2+).

Belongs to the endoribonuclease YbeY family. Zn(2+) is required as a cofactor.

It is found in the cytoplasm. In terms of biological role, single strand-specific metallo-endoribonuclease involved in late-stage 70S ribosome quality control and in maturation of the 3' terminus of the 16S rRNA. The sequence is that of Endoribonuclease YbeY from Alteromonas mediterranea (strain DSM 17117 / CIP 110805 / LMG 28347 / Deep ecotype).